Reading from the N-terminus, the 42-residue chain is Photosystem II reaction center protein J (42 aa).

Residues 10 to 30 (IPLWLVLTIIGLAAIALLALF) traverse the membrane as a helical segment.

The protein belongs to the PsbJ family. In terms of assembly, PSII is composed of 1 copy each of membrane proteins PsbA, PsbB, PsbC, PsbD, PsbE, PsbF, PsbH, PsbI, PsbJ, PsbK, PsbL, PsbM, PsbT, PsbY, PsbZ, Psb30/Ycf12, at least 3 peripheral proteins of the oxygen-evolving complex and a large number of cofactors. It forms dimeric complexes.

Its subcellular location is the plastid. The protein localises to the chloroplast thylakoid membrane. In terms of biological role, this protein is a component of the reaction center of photosystem II. Functionally, one of the components of the core complex of photosystem II (PSII). PSII is a light-driven water:plastoquinone oxidoreductase that uses light energy to abstract electrons from H(2)O, generating O(2) and a proton gradient subsequently used for ATP formation. It consists of a core antenna complex that captures photons, and an electron transfer chain that converts photonic excitation into a charge separation. The chain is Photosystem II reaction center protein J from Euglena gracilis.